Reading from the N-terminus, the 352-residue chain is DNA polymerase IV (352 aa).

In terms of domain architecture, UmuC spans 6–186; the sequence is IIHIDMDAFY…LPLGKIPGVG (181 aa). The Mg(2+) site is built by aspartate 10 and aspartate 104. Glutamate 105 is a catalytic residue.

The protein belongs to the DNA polymerase type-Y family. In terms of assembly, monomer. The cofactor is Mg(2+).

It is found in the cytoplasm. The enzyme catalyses DNA(n) + a 2'-deoxyribonucleoside 5'-triphosphate = DNA(n+1) + diphosphate. In terms of biological role, poorly processive, error-prone DNA polymerase involved in untargeted mutagenesis. Copies undamaged DNA at stalled replication forks, which arise in vivo from mismatched or misaligned primer ends. These misaligned primers can be extended by PolIV. Exhibits no 3'-5' exonuclease (proofreading) activity. May be involved in translesional synthesis, in conjunction with the beta clamp from PolIII. The chain is DNA polymerase IV from Neisseria meningitidis serogroup C / serotype 2a (strain ATCC 700532 / DSM 15464 / FAM18).